Consider the following 449-residue polypeptide: Exodeoxyribonuclease 7 large subunit (449 aa).

This sequence belongs to the XseA family. As to quaternary structure, heterooligomer composed of large and small subunits.

It is found in the cytoplasm. It carries out the reaction Exonucleolytic cleavage in either 5'- to 3'- or 3'- to 5'-direction to yield nucleoside 5'-phosphates.. Its function is as follows. Bidirectionally degrades single-stranded DNA into large acid-insoluble oligonucleotides, which are then degraded further into small acid-soluble oligonucleotides. This Salmonella dublin (strain CT_02021853) protein is Exodeoxyribonuclease 7 large subunit.